A 331-amino-acid chain; its full sequence is Olfactory receptor 6B3 (331 aa).

Over 1-25 the chain is Extracellular; sequence MSGENVTRVGTFILVGFPTAPGLQY. Residue Asn5 is glycosylated (N-linked (GlcNAc...) asparagine). The helical transmembrane segment at 26–46 threads the bilayer; that stretch reads LLFLLFLLTYLFVLVENLAII. The Cytoplasmic portion of the chain corresponds to 47–54; that stretch reads LTVWSSTS. Residues 55–75 form a helical membrane-spanning segment; the sequence is LHRPMYYFLSSMSFLEIWYVS. Topologically, residues 76-99 are extracellular; that stretch reads DITPKMLEGFLLQQKRISFVGCMT. Cys97 and Cys189 are oxidised to a cystine. The chain crosses the membrane as a helical span at residues 100-120; it reads QLYFFSSLVCTECVLLASMAY. The Cytoplasmic segment spans residues 121-139; that stretch reads DRYVAICHPLRYHVLVTPG. A helical transmembrane segment spans residues 140–160; sequence LCLQLVGFSFVSGFTISMIKV. The Extracellular portion of the chain corresponds to 161–196; it reads CFISSVTFCGSNVLNHFFCDISPILKLACTDFSTAE. Residues 197–217 traverse the membrane as a helical segment; the sequence is LVDFILAFIILVFPLLATMLS. Residues 218-237 lie on the Cytoplasmic side of the membrane; sequence YAHITLAVLRIPSATGCWRA. The helical transmembrane segment at 238-258 threads the bilayer; it reads FFTCASHLTVVTVFYTALLFM. Residues 259 to 271 are Extracellular-facing; it reads YVRPQAIDSRSSN. A helical transmembrane segment spans residues 272–292; that stretch reads KLISVLYTVITPILNPLIYCL. Topologically, residues 293–331 are cytoplasmic; it reads RNKEFKNALKKAFGLTSCAVEGRLSSLLELHLQIHSQPL.

This sequence belongs to the G-protein coupled receptor 1 family.

The protein resides in the cell membrane. Functionally, odorant receptor. In Homo sapiens (Human), this protein is Olfactory receptor 6B3 (OR6B3).